Here is a 689-residue protein sequence, read N- to C-terminus: DNA-directed RNA polymerase subunit beta' (689 aa).

Residues cysteine 76, cysteine 78, cysteine 94, and cysteine 97 each coordinate Zn(2+). The Mg(2+) site is built by aspartate 496, aspartate 498, and aspartate 500.

Belongs to the RNA polymerase beta' chain family. RpoC1 subfamily. In plastids the minimal PEP RNA polymerase catalytic core is composed of four subunits: alpha, beta, beta', and beta''. When a (nuclear-encoded) sigma factor is associated with the core the holoenzyme is formed, which can initiate transcription. The cofactor is Mg(2+). Zn(2+) serves as cofactor.

It localises to the plastid. The protein localises to the chloroplast. It catalyses the reaction RNA(n) + a ribonucleoside 5'-triphosphate = RNA(n+1) + diphosphate. Functionally, DNA-dependent RNA polymerase catalyzes the transcription of DNA into RNA using the four ribonucleoside triphosphates as substrates. In Illicium oligandrum (Star anise), this protein is DNA-directed RNA polymerase subunit beta'.